Here is a 360-residue protein sequence, read N- to C-terminus: NAD(P)H-quinone oxidoreductase subunit 1, chloroplastic (360 aa).

9 helical membrane passes run 27–47, 98–118, 129–149, 165–185, 203–223, 248–268, 269–289, 297–317, and 340–360; these read IWIF…VLVI, FSIG…VIPF, IGIF…LMSG, AAQS…ISLL, FWGW…ISSL, YSGI…LISS, LFVT…ISIL, IFGT…FLFI, and FLLP…LFSL.

The protein belongs to the complex I subunit 1 family. NDH is composed of at least 16 different subunits, 5 of which are encoded in the nucleus.

It is found in the plastid. The protein resides in the chloroplast thylakoid membrane. The catalysed reaction is a plastoquinone + NADH + (n+1) H(+)(in) = a plastoquinol + NAD(+) + n H(+)(out). It catalyses the reaction a plastoquinone + NADPH + (n+1) H(+)(in) = a plastoquinol + NADP(+) + n H(+)(out). Functionally, NDH shuttles electrons from NAD(P)H:plastoquinone, via FMN and iron-sulfur (Fe-S) centers, to quinones in the photosynthetic chain and possibly in a chloroplast respiratory chain. The immediate electron acceptor for the enzyme in this species is believed to be plastoquinone. Couples the redox reaction to proton translocation, and thus conserves the redox energy in a proton gradient. This chain is NAD(P)H-quinone oxidoreductase subunit 1, chloroplastic, found in Lepidium virginicum (Virginia pepperweed).